The primary structure comprises 388 residues: Acetate kinase (388 aa).

Residue N7 participates in Mg(2+) binding. K14 lines the ATP pocket. Substrate is bound at residue R76. The active-site Proton donor/acceptor is D133. Residues 193-197 (HLGNG), 267-269 (DMR), and 315-319 (GIGEN) contribute to the ATP site. E374 serves as a coordination point for Mg(2+).

Belongs to the acetokinase family. As to quaternary structure, homodimer. Requires Mg(2+) as cofactor. Mn(2+) serves as cofactor.

The protein localises to the cytoplasm. It carries out the reaction acetate + ATP = acetyl phosphate + ADP. It functions in the pathway metabolic intermediate biosynthesis; acetyl-CoA biosynthesis; acetyl-CoA from acetate: step 1/2. Its function is as follows. Catalyzes the formation of acetyl phosphate from acetate and ATP. Can also catalyze the reverse reaction. This chain is Acetate kinase, found in Micrococcus luteus (strain ATCC 4698 / DSM 20030 / JCM 1464 / CCM 169 / CCUG 5858 / IAM 1056 / NBRC 3333 / NCIMB 9278 / NCTC 2665 / VKM Ac-2230) (Micrococcus lysodeikticus).